The following is a 414-amino-acid chain: Putative transporter YoaB (414 aa).

Residues 1–11 (MLDKIGIPKRL) are Cytoplasmic-facing. The chain crosses the membrane as a helical span at residues 12–32 (AWGFLGVVLFMMGDGLEQGWL). Residues 33-47 (SPFLIENGLTVQQSA) are Extracellular-facing. Residues 48–68 (SIFSIYGIALAIASWFSGVCL) traverse the membrane as a helical segment. At 69–75 (EAFGAKR) the chain is on the cytoplasmic side. Residues 76–96 (TMFMGLLFYVIGTAAFIVFGF) form a helical membrane-spanning segment. At 97 to 107 (EQLNLPVMYVT) the chain is on the extracellular side. A helical membrane pass occupies residues 108 to 128 (YFVKGLGYPLFAYSFLTWVIY). The Cytoplasmic portion of the chain corresponds to 129–136 (RTPQSKLS). A helical membrane pass occupies residues 137–157 (TAVGWFWIAYCLGMFVFGAWY). Residues 158-167 (SSYAIKAFGY) are Extracellular-facing. Residues 168 to 188 (LNTLWSSIFWVCLGAFFALFI) form a helical membrane-spanning segment. Topologically, residues 189–219 (NKDRFEKKKRKRSETAEELLKGVTILFTNPR) are cytoplasmic. Residues 220–240 (VLTGGIIRIINSIGTYGFPVF) traverse the membrane as a helical segment. The Extracellular portion of the chain corresponds to 241–255 (LPMHMAQHGISTNVW). Residues 256–276 (LQIWGTIFLGNIVFNLIFGIV) form a helical membrane-spanning segment. At 277 to 286 (GDKFGWKNTV) the chain is on the cytoplasmic side. A helical membrane pass occupies residues 287 to 307 (IWFGGVGCGIFTVLLYYAPVF). At 308–316 (SGGSLAVVS) the chain is on the extracellular side. The chain crosses the membrane as a helical span at residues 317–337 (VIGFIWGGLLAGYVPIGAIVP). At 338–343 (TVAGKD) the chain is on the cytoplasmic side. A helical membrane pass occupies residues 344 to 364 (KGAAMSVLNLAAGLSAFVGPA). At 365 to 375 (LAWLFIGLVGA) the chain is on the extracellular side. Residues 376-398 (QGVVWIFAALYLASAVLTKCIHI) traverse the membrane as a helical segment. Topologically, residues 399–414 (PEEKAVKEETSPQYAS) are cytoplasmic.

This sequence belongs to the major facilitator superfamily. Sugar transporter (TC 2.A.1.1) family. CsbX subfamily.

It is found in the cell membrane. This Bacillus subtilis (strain 168) protein is Putative transporter YoaB (yoaB).